Consider the following 1102-residue polypeptide: WD repeat-containing protein 72 (1102 aa).

WD repeat units follow at residues 15 to 54, 60 to 102, 160 to 197, 318 to 362, 402 to 441, 459 to 504, 507 to 552, and 555 to 594; these read APPH…KISA, GHSA…CMEK, NCMC…NSIQ, KEQS…VSKF, AGTA…KARL, GHHQ…ILHK, LEAG…CLLH, and KHLF…LERH. Phosphoserine occurs at positions 1081 and 1083.

It is found in the cytoplasmic vesicle. Its function is as follows. Plays a major role in formation of tooth enamel. Specifically required during the maturation phase of amelogenesis for normal formation of the enamel matrix and clearance of enamel proteins. May be involved in localization of the calcium transporter SLC24A4 to the ameloblast cell membrane. The protein is WD repeat-containing protein 72 (WDR72) of Homo sapiens (Human).